The following is a 317-amino-acid chain: Putative HTH-type transcriptional regulatory protein NP_1320A (317 aa).

In terms of domain architecture, HTH cro/C1-type spans 132 to 189 (LSDIRSQEDMSLGKLANELGVSRRTVSKYEDGMSASVEVAAELEEIFDRKLASPVEVL). A DNA-binding region (H-T-H motif) is located at residues 143–162 (LGKLANELGVSRRTVSKYED).

In Natronomonas pharaonis (strain ATCC 35678 / DSM 2160 / CIP 103997 / JCM 8858 / NBRC 14720 / NCIMB 2260 / Gabara) (Halobacterium pharaonis), this protein is Putative HTH-type transcriptional regulatory protein NP_1320A.